The primary structure comprises 211 residues: MMNQSITPPTHPPMSQRFRGYLPVVVDVETGGFNWNHHALLEIACIPIEMDDTGRLYPGEVTSTHVIPAPGTDIDPKSLEVTGIILDHPFRFAKEEKLALEHIFTPVRTTMKKYKCQRAILVGHNAHFDLNFLNAAVTRTAYKRNPFHQFSVFDTVTLAGMAYGQTVLARAVQAAGLDWNAADAHSAVYDAEKTAHLFCTITNIWPLMVAG.

An Exonuclease domain is found at 24–198; it reads VVVDVETGGF…YDAEKTAHLF (175 aa). Residues aspartate 27, glutamate 29, histidine 185, and aspartate 190 each contribute to the Mg(2+) site. The Proton donor/acceptor role is filled by histidine 185.

It belongs to the RNase T family. In terms of assembly, homodimer. Mg(2+) serves as cofactor.

Trims short 3' overhangs of a variety of RNA species, leaving a one or two nucleotide 3' overhang. Responsible for the end-turnover of tRNA: specifically removes the terminal AMP residue from uncharged tRNA (tRNA-C-C-A). Also appears to be involved in tRNA biosynthesis. The protein is Ribonuclease T of Xylella fastidiosa (strain Temecula1 / ATCC 700964).